The chain runs to 260 residues: MADS-box transcription factor 29 (260 aa).

An MADS-box domain is found at 1 to 61 (MGRGKIEIKR…GKMFEYCSPT (61 aa)). Residues 85–175 (DQQIFVEMTR…CRMINENHHQ (91 aa)) enclose the K-box domain.

Expressed in developing seeds.

It is found in the nucleus. In terms of biological role, probable transcription factor. This chain is MADS-box transcription factor 29 (MADS29), found in Oryza sativa subsp. japonica (Rice).